Reading from the N-terminus, the 616-residue chain is Homeodomain-interacting protein kinase 4 (616 aa).

Residues 11–347 enclose the Protein kinase domain; the sequence is YDIIEVLGKG…PSAALRHPFV (337 aa). Residues 17–25 and Lys-40 each bind ATP; that span reads LGKGTFGEV. Catalysis depends on Asp-136, which acts as the Proton acceptor. A disordered region spans residues 487-616; it reads HKARKAPAGS…SFLQHVGGHH (130 aa). Residues 497–512 show a composition bias toward polar residues; the sequence is KSDSNFSNLIRLSQAS. The residue at position 512 (Ser-512) is a Phosphoserine. Positions 542 to 560 are enriched in basic and acidic residues; it reads REGDGPGIKDRPMDAERPG.

This sequence belongs to the protein kinase superfamily. CMGC Ser/Thr protein kinase family. HIPK subfamily. In terms of processing, autophosphorylated. As to expression, expressed at moderate levels in lung and white adipose tissues and weakly in brain and liver.

The protein resides in the cytoplasm. It carries out the reaction L-seryl-[protein] + ATP = O-phospho-L-seryl-[protein] + ADP + H(+). The catalysed reaction is L-threonyl-[protein] + ATP = O-phospho-L-threonyl-[protein] + ADP + H(+). Protein kinase that phosphorylates murine TP53 at Ser-9, and thus induces TP53 repression of BIRC5 promoter. May act as a corepressor of transcription factors (Potential). The polypeptide is Homeodomain-interacting protein kinase 4 (Hipk4) (Mus musculus (Mouse)).